The primary structure comprises 398 residues: Elongation factor Tu (398 aa).

The tr-type G domain maps to 10–207 (KPHVNIGTIG…TVDEYIPEPE (198 aa)). The G1 stretch occupies residues 19–26 (GHVDHGKT). GTP is bound at residue 19-26 (GHVDHGKT). Thr-26 lines the Mg(2+) pocket. Positions 63-67 (GITIN) are G2. Positions 84–87 (DAPG) are G3. Residues 84 to 88 (DAPGH) and 139 to 142 (NKVD) each bind GTP. The segment at 139 to 142 (NKVD) is G4. Positions 177–179 (SAL) are G5.

It belongs to the TRAFAC class translation factor GTPase superfamily. Classic translation factor GTPase family. EF-Tu/EF-1A subfamily. Monomer.

It is found in the cytoplasm. The catalysed reaction is GTP + H2O = GDP + phosphate + H(+). GTP hydrolase that promotes the GTP-dependent binding of aminoacyl-tRNA to the A-site of ribosomes during protein biosynthesis. This chain is Elongation factor Tu, found in Streptococcus agalactiae serotype Ia (strain ATCC 27591 / A909 / CDC SS700).